Reading from the N-terminus, the 657-residue chain is Zinc finger CCCH domain-containing protein 50 (657 aa).

ANK repeat units follow at residues 68–97 (EART…CVDV) and 104–136 (DGAT…DPAT). Residues 176-206 (SVASGSSSPPLSSSPDEGNRSPSSRSSSLSP) are compositionally biased toward low complexity. Positions 176-222 (SVASGSSSPPLSSSPDEGNRSPSSRSSSLSPITVDRGKKEYPVDPTL) are disordered. 2 consecutive C3H1-type zinc fingers follow at residues 274–302 (PYTA…HGVF) and 311–333 (YRTR…AHDE). Residues 507–566 (YSPRALDPSSLAHSPFGGMSPRSPRTMEPTSPLSARVGAPATQRPSVGSPRNSSAWGTVG) form a disordered region. A compositionally biased stretch (polar residues) spans 549–562 (QRPSVGSPRNSSAW).

This is Zinc finger CCCH domain-containing protein 50 from Oryza sativa subsp. japonica (Rice).